We begin with the raw amino-acid sequence, 176 residues long: ATP synthase subunit b (176 aa).

A helical membrane pass occupies residues 27–47; it reads FFVFSFLTLILVVTIVTLLVY.

This sequence belongs to the ATPase B chain family. F-type ATPases have 2 components, F(1) - the catalytic core - and F(0) - the membrane proton channel. F(1) has five subunits: alpha(3), beta(3), gamma(1), delta(1), epsilon(1). F(0) has three main subunits: a(1), b(2) and c(10-14). The alpha and beta chains form an alternating ring which encloses part of the gamma chain. F(1) is attached to F(0) by a central stalk formed by the gamma and epsilon chains, while a peripheral stalk is formed by the delta and b chains.

Its subcellular location is the cell membrane. F(1)F(0) ATP synthase produces ATP from ADP in the presence of a proton or sodium gradient. F-type ATPases consist of two structural domains, F(1) containing the extramembraneous catalytic core and F(0) containing the membrane proton channel, linked together by a central stalk and a peripheral stalk. During catalysis, ATP synthesis in the catalytic domain of F(1) is coupled via a rotary mechanism of the central stalk subunits to proton translocation. Its function is as follows. Component of the F(0) channel, it forms part of the peripheral stalk, linking F(1) to F(0). The chain is ATP synthase subunit b from Metamycoplasma arthritidis (strain 158L3-1) (Mycoplasma arthritidis).